Consider the following 113-residue polypeptide: Dolichyl-diphosphooligosaccharide--protein glycosyltransferase subunit dad1 (113 aa).

The Cytoplasmic segment spans residues 1-30 (MSVSVFSVVSRFLDEYVSSTPQRLKLLDAY). Residues 31–51 (LLYILLTGALQFLYCLLVGTF) traverse the membrane as a helical segment. Residue Pro52 is a topological domain, lumenal. The helical transmembrane segment at 53 to 73 (FNSFLSGFISSVGSFILAVCL) threads the bilayer. Topologically, residues 74 to 92 (RIQINPQNKSDFQGISPER) are cytoplasmic. The helical transmembrane segment at 93 to 113 (AFADFLFANTILHLVVVNFIG) threads the bilayer.

It belongs to the DAD/OST2 family. Component of the oligosaccharyltransferase (OST) complex.

Its subcellular location is the endoplasmic reticulum membrane. Its pathway is protein modification; protein glycosylation. Functionally, subunit of the oligosaccharyl transferase (OST) complex that catalyzes the initial transfer of a defined glycan (Glc(3)Man(9)GlcNAc(2) in eukaryotes) from the lipid carrier dolichol-pyrophosphate to an asparagine residue within an Asn-X-Ser/Thr consensus motif in nascent polypeptide chains, the first step in protein N-glycosylation. N-glycosylation occurs cotranslationally and the complex associates with the Sec61 complex at the channel-forming translocon complex that mediates protein translocation across the endoplasmic reticulum (ER). All subunits are required for a maximal enzyme activity. This chain is Dolichyl-diphosphooligosaccharide--protein glycosyltransferase subunit dad1, found in Xenopus laevis (African clawed frog).